A 220-amino-acid polypeptide reads, in one-letter code: Urease accessory protein UreE (220 aa).

Positions 145–220 (EGGAYSAGGH…QIHKRRPDNL (76 aa)) are disordered. Positions 156–177 (HGHDHGSHEHSAHDHGKHDHAP) are enriched in basic and acidic residues. Low complexity predominate over residues 178 to 188 (AKPATAATPAA). Positions 191-206 (HGPDCNHGHDHAHEAK) are enriched in basic and acidic residues.

The protein belongs to the UreE family.

It is found in the cytoplasm. Its function is as follows. Involved in urease metallocenter assembly. Binds nickel. Probably functions as a nickel donor during metallocenter assembly. This is Urease accessory protein UreE from Polaromonas sp. (strain JS666 / ATCC BAA-500).